The chain runs to 371 residues: Putative phosphoserine aminotransferase (371 aa).

R45 is an L-glutamate binding site. Pyridoxal 5'-phosphate-binding residues include F103, T149, D171, and Q194. K195 carries the post-translational modification N6-(pyridoxal phosphate)lysine. A pyridoxal 5'-phosphate-binding site is contributed by 246-247 (NT).

The protein belongs to the class-V pyridoxal-phosphate-dependent aminotransferase family. SerC subfamily. As to quaternary structure, homodimer. Requires pyridoxal 5'-phosphate as cofactor.

The protein resides in the cytoplasm. The enzyme catalyses O-phospho-L-serine + 2-oxoglutarate = 3-phosphooxypyruvate + L-glutamate. It catalyses the reaction 4-(phosphooxy)-L-threonine + 2-oxoglutarate = (R)-3-hydroxy-2-oxo-4-phosphooxybutanoate + L-glutamate. It functions in the pathway amino-acid biosynthesis; L-serine biosynthesis; L-serine from 3-phospho-D-glycerate: step 2/3. Its pathway is cofactor biosynthesis; pyridoxine 5'-phosphate biosynthesis; pyridoxine 5'-phosphate from D-erythrose 4-phosphate: step 3/5. Catalyzes the reversible conversion of 3-phosphohydroxypyruvate to phosphoserine and of 3-hydroxy-2-oxo-4-phosphonooxybutanoate to phosphohydroxythreonine. The sequence is that of Putative phosphoserine aminotransferase from Mycolicibacterium vanbaalenii (strain DSM 7251 / JCM 13017 / BCRC 16820 / KCTC 9966 / NRRL B-24157 / PYR-1) (Mycobacterium vanbaalenii).